A 400-amino-acid chain; its full sequence is Argininosuccinate synthase (400 aa).

ATP is bound at residue 8–16 (AYSGGLDTS). L-citrulline is bound at residue Tyr-87. Position 117 (Gly-117) interacts with ATP. Positions 119, 123, and 124 each coordinate L-aspartate. Asn-123 is an L-citrulline binding site. L-citrulline is bound by residues Arg-127, Ser-175, Glu-260, and Tyr-272.

It belongs to the argininosuccinate synthase family. Type 1 subfamily. As to quaternary structure, homotetramer.

It localises to the cytoplasm. It carries out the reaction L-citrulline + L-aspartate + ATP = 2-(N(omega)-L-arginino)succinate + AMP + diphosphate + H(+). The protein operates within amino-acid biosynthesis; L-arginine biosynthesis; L-arginine from L-ornithine and carbamoyl phosphate: step 2/3. The protein is Argininosuccinate synthase of Mycobacterium sp. (strain JLS).